The chain runs to 381 residues: Acetylornithine deacetylase (381 aa).

His79 lines the Zn(2+) pocket. Residue Asp81 is part of the active site. Asp111 lines the Zn(2+) pocket. Residue Glu143 is part of the active site. Residues Glu144, Glu168, and His354 each coordinate Zn(2+).

Belongs to the peptidase M20A family. ArgE subfamily. In terms of assembly, homodimer. Zn(2+) serves as cofactor. Requires Co(2+) as cofactor. The cofactor is glutathione.

It localises to the cytoplasm. The enzyme catalyses N(2)-acetyl-L-ornithine + H2O = L-ornithine + acetate. It functions in the pathway amino-acid biosynthesis; L-arginine biosynthesis; L-ornithine from N(2)-acetyl-L-ornithine (linear): step 1/1. Its function is as follows. Catalyzes the hydrolysis of the amide bond of N(2)-acetylated L-amino acids. Cleaves the acetyl group from N-acetyl-L-ornithine to form L-ornithine, an intermediate in L-arginine biosynthesis pathway, and a branchpoint in the synthesis of polyamines. This chain is Acetylornithine deacetylase, found in Buchnera aphidicola subsp. Acyrthosiphon pisum (strain APS) (Acyrthosiphon pisum symbiotic bacterium).